The primary structure comprises 411 residues: Methylthioribose-1-phosphate isomerase (411 aa).

S2 is subject to N-acetylserine. Residue D280 is the Proton donor of the active site. S351 is modified (phosphoserine).

Belongs to the eIF-2B alpha/beta/delta subunits family. MtnA subfamily. In terms of assembly, homodimer.

It is found in the cytoplasm. It localises to the nucleus. It catalyses the reaction 5-(methylsulfanyl)-alpha-D-ribose 1-phosphate = 5-(methylsulfanyl)-D-ribulose 1-phosphate. It functions in the pathway amino-acid biosynthesis; L-methionine biosynthesis via salvage pathway; L-methionine from S-methyl-5-thio-alpha-D-ribose 1-phosphate: step 1/6. Its function is as follows. Catalyzes the interconversion of methylthioribose-1-phosphate (MTR-1-P) into methylthioribulose-1-phosphate (MTRu-1-P). This is Methylthioribose-1-phosphate isomerase from Saccharomyces cerevisiae (strain RM11-1a) (Baker's yeast).